Here is a 183-residue protein sequence, read N- to C-terminus: Shikimate kinase (183 aa).

14–19 is a binding site for ATP; sequence GAGKTT. Residue Thr18 participates in Mg(2+) binding. 3 residues coordinate substrate: Asp36, Arg60, and Gly82. Arg120 contributes to the ATP binding site. Arg139 is a substrate binding site. Position 156 (Gln156) interacts with ATP.

Belongs to the shikimate kinase family. Monomer. Mg(2+) serves as cofactor.

The protein localises to the cytoplasm. It carries out the reaction shikimate + ATP = 3-phosphoshikimate + ADP + H(+). The protein operates within metabolic intermediate biosynthesis; chorismate biosynthesis; chorismate from D-erythrose 4-phosphate and phosphoenolpyruvate: step 5/7. Its function is as follows. Catalyzes the specific phosphorylation of the 3-hydroxyl group of shikimic acid using ATP as a cosubstrate. In Thiobacillus denitrificans (strain ATCC 25259 / T1), this protein is Shikimate kinase.